A 99-amino-acid chain; its full sequence is MDLIGFGYAALVTIGSVLGYKRRGGVPSLIAGLSVGLLAGYGAYRVSNDRRDVKVSLFTAFFLATIMGVRFKRSKKVMPAGLVAGLSLMMILRLVLLLL.

3 helical membrane passes run 1-21 (MDLIGFGYAALVTIGSVLGYK), 24-44 (GGVPSLIAGLSVGLLAGYGAY), and 79-99 (PAGLVAGLSLMMILRLVLLLL).

It belongs to the TMEM14 family.

The protein resides in the mitochondrion membrane. It is found in the endoplasmic reticulum membrane. Inhibits apoptosis via negative regulation of the mitochondrial outer membrane permeabilization involved in apoptotic signaling pathway. This Mus musculus (Mouse) protein is Transmembrane protein 14A (Tmem14a).